The sequence spans 186 residues: piRNA-mediated silencing protein C19orf84 (186 aa).

2 disordered regions span residues 1–42 (MEQP…NSTD) and 89–186 (SQAG…ETEY). Residues 13–22 (NNLSLPSSGT) show a composition bias toward polar residues. Residues 24 to 36 (PWPPAPLPAPPPL) are compositionally biased toward pro residues. Basic residues predominate over residues 114-126 (RPGWGRGLHRRGL). The segment covering 145–157 (RTPPMTLPSPPTL) has biased composition (pro residues).

Interacts with SPOCD1.

It localises to the nucleus. The protein resides in the nucleoplasm. Functionally, protein adapter involved in piRNA-directed transposon methylation by connecting PIWIL4-piRNA and DNA methylation machineries. The PIWIL4-piRNA pathway plays a central role during spermatogenesis by directing transposon DNA methylation and silencing, thereby preventing their mobilization, which is essential for the germline integrity. In Homo sapiens (Human), this protein is piRNA-mediated silencing protein C19orf84.